The chain runs to 298 residues: Riboflavin transporter (298 aa).

9 helical membrane passes run 8 to 28, 35 to 55, 79 to 99, 101 to 121, 125 to 145, 151 to 171, 184 to 204, 211 to 231, and 258 to 278; these read LQGA…NSVA, FGLP…VVIL, VFLA…PVPI, QGIA…GLWL, VGMA…IILE, FNLA…YSLM, MVVY…LPDW, TVWL…WAIA, and WLVF…IIVL. 2 EamA domains span residues 10-144 and 156-284; these read GALW…MIIL and LLPV…AFIT.

It belongs to the drug/metabolite transporter (DMT) superfamily. 10 TMS drug/metabolite exporter (DME) (TC 2.A.7.3) family.

Its subcellular location is the cell membrane. Transports riboflavin into the cell. The polypeptide is Riboflavin transporter (Vibrio cholerae serotype O1 (strain ATCC 39315 / El Tor Inaba N16961)).